The primary structure comprises 214 residues: Nicotinamidase (214 aa).

Asp-18 functions as the Proton acceptor in the catalytic mechanism. Residues Asp-56, His-58, His-62, and His-91 each contribute to the a divalent metal cation site. Residue Lys-116 is part of the active site. Catalysis depends on Cys-161, which acts as the Nucleophile.

Belongs to the isochorismatase family. It depends on a divalent metal cation as a cofactor.

It carries out the reaction nicotinamide + H2O = nicotinate + NH4(+). It functions in the pathway cofactor biosynthesis; nicotinate biosynthesis; nicotinate from nicotinamide: step 1/1. Functionally, catalyzes the deamidation of nicotinamide (NAM) into nicotinate (Na). Functions in the deamidating salvage pathway for production of NAD from nicotinamide. The polypeptide is Nicotinamidase (Acinetobacter baylyi (strain ATCC 33305 / BD413 / ADP1)).